A 117-amino-acid chain; its full sequence is MRVKRGMATHRRHKKYLKMAKGYRGGRSKLYRTAREAVERSLAYSTRDRKVRKREFRKLWILRINAAARENGVSYSKFIHGLALAGIELNRKVLADLAVREKEDFAKLAELVKSKLS.

It belongs to the bacterial ribosomal protein bL20 family.

Functionally, binds directly to 23S ribosomal RNA and is necessary for the in vitro assembly process of the 50S ribosomal subunit. It is not involved in the protein synthesizing functions of that subunit. The chain is Large ribosomal subunit protein bL20 from Oleidesulfovibrio alaskensis (strain ATCC BAA-1058 / DSM 17464 / G20) (Desulfovibrio alaskensis).